Consider the following 361-residue polypeptide: Serpentine receptor class epsilon-32 (361 aa).

The next 7 helical transmembrane spans lie at 34-54 (IIEL…LYVM), 66-86 (ILYI…LITI), 124-144 (LLIF…YGIL), 168-188 (IPIA…LSVL), 195-215 (FLSH…YLFI), 256-276 (LVFV…ALAF), and 286-306 (FVEN…MLTI).

The protein belongs to the nematode receptor-like protein sre family.

The protein resides in the membrane. The polypeptide is Serpentine receptor class epsilon-32 (sre-32) (Caenorhabditis elegans).